Consider the following 378-residue polypeptide: WUSCHEL-related homeobox 9 (378 aa).

2 disordered regions span residues 1-60 (MASS…NPKP) and 123-173 (KHSL…GSQM). Residues 32 to 42 (SASHRSSPFSS) are compositionally biased toward low complexity. Residues 45 to 54 (EVERSPEPKP) are compositionally biased toward basic and acidic residues. A DNA-binding region (homeobox; WUS-type) is located at residues 51–115 (EPKPRWNPKP…NRKSRSKHKL (65 aa)). Composition is skewed to low complexity over residues 137–152 (PSAS…SSKS) and 161–171 (KNNTNLSLGGS).

The protein belongs to the WUS homeobox family. In terms of tissue distribution, expressed in the basal cell and later at the boundary between suspensor and proembryo. Expressed at low levels in proliferating tissues post embryonically. Detected in vegetative shoot apical meristem, leaf primordia, floral meristems, emerging floral organs, epidermal layer of the placenta and in the upper portion of the root meristematic zone.

The protein resides in the nucleus. The protein localises to the cytoplasm. Functionally, homeodomain transcription factor required for meristem growth and early development. Promotes cell proliferation and prevents premature differentiation in meristematic tissues during postembryonic development. Essential for maintaining tissue growth during embryogenesis. May act by repressing TSS to promote meristematic proliferation. Involved in the transcriptional activation of a subset of cytokinin response factors. May act as a negative regulator of cytokinin signaling in the dark. The protein is WUSCHEL-related homeobox 9 of Arabidopsis thaliana (Mouse-ear cress).